A 431-amino-acid polypeptide reads, in one-letter code: Argininosuccinate lyase (431 aa).

The protein belongs to the lyase 1 family. Argininosuccinate lyase subfamily.

It is found in the cytoplasm. The enzyme catalyses 2-(N(omega)-L-arginino)succinate = fumarate + L-arginine. The protein operates within amino-acid biosynthesis; L-arginine biosynthesis; L-arginine from L-ornithine and carbamoyl phosphate: step 3/3. In Xanthomonas oryzae pv. oryzae (strain MAFF 311018), this protein is Argininosuccinate lyase.